The sequence spans 90 residues: Probable Fe(2+)-trafficking protein (90 aa).

Belongs to the Fe(2+)-trafficking protein family. As to quaternary structure, monomer.

In terms of biological role, could be a mediator in iron transactions between iron acquisition and iron-requiring processes, such as synthesis and/or repair of Fe-S clusters in biosynthetic enzymes. The chain is Probable Fe(2+)-trafficking protein from Proteus mirabilis (strain HI4320).